The following is a 228-amino-acid chain: Ribosomal RNA large subunit methyltransferase E (228 aa).

Residues Gly76, Trp78, Asp99, Asp115, and Asp139 each coordinate S-adenosyl-L-methionine. The active-site Proton acceptor is the Lys179.

This sequence belongs to the class I-like SAM-binding methyltransferase superfamily. RNA methyltransferase RlmE family.

Its subcellular location is the cytoplasm. It catalyses the reaction uridine(2552) in 23S rRNA + S-adenosyl-L-methionine = 2'-O-methyluridine(2552) in 23S rRNA + S-adenosyl-L-homocysteine + H(+). Functionally, specifically methylates the uridine in position 2552 of 23S rRNA at the 2'-O position of the ribose in the fully assembled 50S ribosomal subunit. The sequence is that of Ribosomal RNA large subunit methyltransferase E from Nitrobacter hamburgensis (strain DSM 10229 / NCIMB 13809 / X14).